An 858-amino-acid chain; its full sequence is Taste receptor type 1 member 3 (858 aa).

Positions 1–20 (MPALAIMGLSLAAFLELGMG) are cleaved as a signal peptide. Residues 21-572 (ASLCLSQQFK…RPKFLAWGEP (552 aa)) lie on the Extracellular side of the membrane. The N-linked (GlcNAc...) asparagine; when associated with variant T-60 glycan is linked to asparagine 58. 9 N-linked (GlcNAc...) asparagine glycosylation sites follow: asparagine 85, asparagine 130, asparagine 203, asparagine 264, asparagine 379, asparagine 387, asparagine 418, asparagine 439, and asparagine 482. A helical membrane pass occupies residues 573–593 (VVLSLLLLLCLVLGLALAALG). Residues 594-610 (LSVHHWDSPLVQASGGS) lie on the Cytoplasmic side of the membrane. A helical membrane pass occupies residues 611–631 (QFCFGLICLGLFCLSVLLFPG). The Extracellular portion of the chain corresponds to 632–644 (RPSSASCLAQQPM). A helical transmembrane segment spans residues 645–665 (AHLPLTGCLSTLFLQAAETFV). Residues 666 to 687 (ESELPLSWANWLCSYLRGLWAW) lie on the Cytoplasmic side of the membrane. A helical membrane pass occupies residues 688–708 (LVVLLATFVEAALCAWYLIAF). Topologically, residues 709–735 (PPEVVTDWSVLPTEVLEHCHVRSWVSL) are extracellular. A helical transmembrane segment spans residues 736 to 756 (GLVHITNAMLAFLCFLGTFLV). Over 757–767 (QSQPGRYNRAR) the chain is Cytoplasmic. Residues 768–788 (GLTFAMLAYFITWVSFVPLLA) form a helical membrane-spanning segment. Residues 789 to 796 (NVQVAYQP) lie on the Extracellular side of the membrane. Residues 797-817 (AVQMGAILVCALGILVTFHLP) traverse the membrane as a helical segment. At 818–858 (KCYVLLWLPKLNTQEFFLGRNAKKAADENSGGGEAAQGHNE) the chain is on the cytoplasmic side.

The protein belongs to the G-protein coupled receptor 3 family. TAS1R subfamily. As to quaternary structure, forms homodimers or heterodimers with TAS1R1 and TAS1R2. The Thr-60 variant is predicted to introduce a novel N-linked glycosylation site at Asn-58. The addition of even a short carbohydrate group at Asn-58 is predicted to disrupt one of the contact surfaces required for stability of a dimer. Therefore a Thr-60 variant N-glycosylated at Asn-58 is predicted to be precluded from forming homodimers or heterodimers. Expressed in circumvallate, foliate and fungiform taste papillae as well as in taste buds on the palate. Also expressed in testis. Not expressed in brain, heart, kidney, liver or spleen. The topographic distribution in various taste papillae is different from those of other T1R members.

The protein localises to the cell membrane. Putative taste receptor. TAS1R1/TAS1R3 responds to the umami taste stimulus (the taste of monosodium glutamate) and also to most of the 20 standard L-amino acids, but not to their D-enantiomers or other compounds. TAS1R2/TAS1R3 recognizes diverse natural and synthetic sweeteners. TAS1R3 is essential for the recognition and response to the disaccharide trehalose. Sequence differences within and between species can significantly influence the selectivity and specificity of taste responses. In Mus musculus (Mouse), this protein is Taste receptor type 1 member 3 (Tas1r3).